Reading from the N-terminus, the 159-residue chain is U-actitoxin-Avd13b (159 aa).

The first 18 residues, 1 to 18 (MKSIFLVFFAVCLVKAEA), serve as a signal peptide directing secretion. The propeptide occupies 19-26 (GKGRKREP). Intrachain disulfides connect Cys33–Cys45 and Cys36–Cys52. A propeptide spanning residues 59 to 60 (EP) is cleaved from the precursor. Intrachain disulfides connect Cys67–Cys79 and Cys70–Cys86. Residues 93 to 94 (EP) constitute a propeptide that is removed on maturation. 2 disulfide bridges follow: Cys101–Cys113 and Cys104–Cys120. Residues 127–128 (EP) constitute a propeptide that is removed on maturation. 2 cysteine pairs are disulfide-bonded: Cys135–Cys147 and Cys138–Cys154.

It belongs to the sea anemone BBH family.

It localises to the secreted. The protein localises to the nematocyst. In terms of biological role, inhibits ion channels. This is U-actitoxin-Avd13b from Anemonia viridis (Snakelocks anemone).